A 59-amino-acid polypeptide reads, in one-letter code: Large ribosomal subunit protein bL25 (59 aa).

This sequence belongs to the bacterial ribosomal protein bL25 family.

The polypeptide is Large ribosomal subunit protein bL25 (ctc) (Bacillus caldolyticus).